The primary structure comprises 73 residues: MWERERKKFLEDIRKKSLQELEKLLDELKLELTRLRFKKQVQGLENPMEMRKVKRNIARVLTVIREKQLRGEG.

The protein belongs to the universal ribosomal protein uL29 family.

In Aquifex aeolicus (strain VF5), this protein is Large ribosomal subunit protein uL29 (rpmC).